Consider the following 330-residue polypeptide: MDTIVTPSDHRAEGEAVSTASPRDYFDLMKPRVMTLVVFTAFAGLIAAPVDADPFLAFMSILCLAVGAGAAGALNMAYDADIDATMQRTRKRPIPRGVVSVSNAYGFGVVASILSVLLMALASNYLAAGLLAFSIFFYAVIYTMILKRSTPQNIVIGGAAGAFPPMIGWVAATGEISLDAVILFMIIFLWTPPHSWALALYKSGDYAAANVPMMPVAKGAKSTRLQILLYSIVLVIFAGAPVLTGLGGAVYGATSLGGGALFLLLAWRIFRSRAGEAGSAEEGALYAVRAGDKAARDLFAYSIGYLTVLFAALIVEHAFGAYVAIPGVSP.

A run of 9 helical transmembrane segments spans residues 33-53 (VMTLVVFTAFAGLIAAPVDAD), 54-74 (PFLAFMSILCLAVGAGAAGAL), 101-121 (VSNAYGFGVVASILSVLLMAL), 126-146 (LAAGLLAFSIFFYAVIYTMIL), 154-174 (IVIGGAAGAFPPMIGWVAATG), 180-200 (AVILFMIIFLWTPPHSWALAL), 227-247 (ILLYSIVLVIFAGAPVLTGLG), 250-270 (VYGATSLGGGALFLLLAWRIF), and 308-328 (VLFAALIVEHAFGAYVAIPGV).

This sequence belongs to the UbiA prenyltransferase family. Protoheme IX farnesyltransferase subfamily. As to quaternary structure, interacts with CtaA.

Its subcellular location is the cell inner membrane. The catalysed reaction is heme b + (2E,6E)-farnesyl diphosphate + H2O = Fe(II)-heme o + diphosphate. The protein operates within porphyrin-containing compound metabolism; heme O biosynthesis; heme O from protoheme: step 1/1. Its function is as follows. Converts heme B (protoheme IX) to heme O by substitution of the vinyl group on carbon 2 of heme B porphyrin ring with a hydroxyethyl farnesyl side group. The protein is Protoheme IX farnesyltransferase of Maricaulis maris (strain MCS10) (Caulobacter maris).